A 792-amino-acid polypeptide reads, in one-letter code: Kinesin-like protein KIF3C (792 aa).

A Kinesin motor domain is found at 10–363 (ALKVVARCRP…LRFANRAKNI (354 aa)). ATP is bound at residue 97–104 (GQTGTGKT). 3 disordered regions span residues 249-287 (GSERQNKAGPNTTGGTATQPTGGGGGGGGGGGGGERPKE), 397-418 (MLGKRLRRKSSRRKKAVSAPAG), and 749-792 (RPST…LDHE). The span at 257–268 (GPNTTGGTATQP) shows a compositional bias: low complexity. Gly residues predominate over residues 269–282 (TGGGGGGGGGGGGG). Residues 374–627 (KDTLLREFQE…QNEQTRELKL (254 aa)) are a coiled coil. Over residues 397 to 412 (MLGKRLRRKSSRRKKA) the composition is skewed to basic residues. The tract at residues 628 to 792 (KYLIIENFIP…LRPTTVLDHE (165 aa)) is globular. The segment covering 773–792 (AHASLAASAALRPTTVLDHE) has biased composition (low complexity).

This sequence belongs to the TRAFAC class myosin-kinesin ATPase superfamily. Kinesin family. Kinesin II subfamily. In terms of assembly, heterodimer of KIF3A and KIF3C.

The protein localises to the cytoplasm. Its subcellular location is the cytoskeleton. Microtubule-based anterograde translocator for membranous organelles. The protein is Kinesin-like protein KIF3C (KIF3C) of Bos taurus (Bovine).